Reading from the N-terminus, the 534-residue chain is uncharacterized protein (534 aa).

5 consecutive transmembrane segments (helical) span residues 4–22 (ILVLLCVIALGLLVGRVSF), 24–46 (GISLGTSAILFVALLAGHYGWTI), 56–75 (ALFVYCVGISAGPTFFRGLA), 82–104 (AITGSVIVLTGVAVTWTSARLLG), and 134–156 (PAAVAVGFGVAYPIGIIAVVLFV). The segment at 167-187 (GDSDGTDSASETSGQSSAEIA) is disordered. Polar residues predominate over residues 172–187 (TDSASETSGQSSAEIA). 2 consecutive RCK C-terminal domains span residues 180–264 (GQSS…TLGE) and 265–349 (LQDT…AVGH). 6 consecutive transmembrane segments (helical) span residues 359 to 378 (LLSLVAGIVLGIFVGNLSLQ), 382 to 401 (FSMSLGIAGGPLMVGLILGH), 408 to 430 (IRGSYPPAAMLLMTEGGLALFLA), 445 to 467 (MERGAMLCVAAAAIAIIPLLVGF), 479 to 501 (WQSLGATCGGMTSTPGLAVLTGA), and 511 to 533 (YVAAYPVALVLITVAAPWLVELI).

It belongs to the AAE transporter (TC 2.A.81) family.

The protein resides in the cell membrane. This is an uncharacterized protein from Rhodopirellula baltica (strain DSM 10527 / NCIMB 13988 / SH1).